The following is a 138-amino-acid chain: Large ribosomal subunit protein bL19 (138 aa).

This sequence belongs to the bacterial ribosomal protein bL19 family.

In terms of biological role, this protein is located at the 30S-50S ribosomal subunit interface and may play a role in the structure and function of the aminoacyl-tRNA binding site. The sequence is that of Large ribosomal subunit protein bL19 (rplS) from Rickettsia prowazekii (strain Madrid E).